The chain runs to 102 residues: Exocrine gland-secreted peptide 1 (102 aa).

The signal sequence occupies residues Met1 to Gly22. Cys63 and Cys95 are joined by a disulfide.

It belongs to the exocrine gland-secreted peptide family. Monomer. Expressed in the extraorbital lacrimal gland from where it is secreted into tears.

The protein resides in the secreted. In terms of biological role, male-specific phermone which is recognized by the Vmn2r116/V2rp5 receptor in the vomeronasal organ (VNO) and enhances female sexual receptive behavior (lordosis) upon male mounting, resulting in successful copulation. In Mus musculus (Mouse), this protein is Exocrine gland-secreted peptide 1.